A 138-amino-acid polypeptide reads, in one-letter code: Urease subunit beta (138 aa).

The disordered stretch occupies residues arginine 115–glutamine 138. Over residues alanine 128–glutamine 138 the composition is skewed to acidic residues.

The protein belongs to the urease beta subunit family. In terms of assembly, heterotrimer of UreA (gamma), UreB (beta) and UreC (alpha) subunits. Three heterotrimers associate to form the active enzyme.

It localises to the cytoplasm. It catalyses the reaction urea + 2 H2O + H(+) = hydrogencarbonate + 2 NH4(+). It participates in nitrogen metabolism; urea degradation; CO(2) and NH(3) from urea (urease route): step 1/1. The polypeptide is Urease subunit beta (Haloarcula marismortui (strain ATCC 43049 / DSM 3752 / JCM 8966 / VKM B-1809) (Halobacterium marismortui)).